A 100-amino-acid polypeptide reads, in one-letter code: Aspartyl/glutamyl-tRNA(Asn/Gln) amidotransferase subunit C (100 aa).

It belongs to the GatC family. In terms of assembly, heterotrimer of A, B and C subunits.

It carries out the reaction L-glutamyl-tRNA(Gln) + L-glutamine + ATP + H2O = L-glutaminyl-tRNA(Gln) + L-glutamate + ADP + phosphate + H(+). It catalyses the reaction L-aspartyl-tRNA(Asn) + L-glutamine + ATP + H2O = L-asparaginyl-tRNA(Asn) + L-glutamate + ADP + phosphate + 2 H(+). Its function is as follows. Allows the formation of correctly charged Asn-tRNA(Asn) or Gln-tRNA(Gln) through the transamidation of misacylated Asp-tRNA(Asn) or Glu-tRNA(Gln) in organisms which lack either or both of asparaginyl-tRNA or glutaminyl-tRNA synthetases. The reaction takes place in the presence of glutamine and ATP through an activated phospho-Asp-tRNA(Asn) or phospho-Glu-tRNA(Gln). The chain is Aspartyl/glutamyl-tRNA(Asn/Gln) amidotransferase subunit C from Staphylococcus saprophyticus subsp. saprophyticus (strain ATCC 15305 / DSM 20229 / NCIMB 8711 / NCTC 7292 / S-41).